We begin with the raw amino-acid sequence, 325 residues long: Large ribosomal subunit protein uL1m (325 aa).

The N-terminal 50 residues, 1 to 50 (MAATVRCFGRVLIHHQRCSLATVTSQTSLYPCCIYVPVPNRHFAAAAKPA), are a transit peptide targeting the mitochondrion. Positions 47–66 (AKPAKKTKKGTKEKASNEKK) are disordered. Residues 56-66 (GTKEKASNEKK) show a composition bias toward basic and acidic residues.

It belongs to the universal ribosomal protein uL1 family.

Its subcellular location is the mitochondrion. This chain is Large ribosomal subunit protein uL1m (MRPL1), found in Bos taurus (Bovine).